Reading from the N-terminus, the 161-residue chain is Vasotocin-neurophysin VT (161 aa).

A signal peptide spans 1–19 (MAEPSLPLSFLCLLALSSA). Cysteine 20 and cysteine 25 are joined by a disulfide. Glycine 28 carries the glycine amide modification. 7 disulfide bridges follow: cysteine 41/cysteine 85, cysteine 44/cysteine 58, cysteine 52/cysteine 75, cysteine 59/cysteine 65, cysteine 92/cysteine 104, cysteine 98/cysteine 116, and cysteine 105/cysteine 110.

It belongs to the vasopressin/oxytocin family. Post-translationally, seven disulfide bonds are present in neurophysin.

It is found in the secreted. In terms of biological role, vasotocin is an antidiuretic hormone. This chain is Vasotocin-neurophysin VT, found in Gallus gallus (Chicken).